The chain runs to 342 residues: Putative aryl-alcohol dehydrogenase AAD16 (342 aa).

It belongs to the aldo/keto reductase family. Aldo/keto reductase 2 subfamily.

Putative aryl-alcohol dehydrogenase. The polypeptide is Putative aryl-alcohol dehydrogenase AAD16 (Saccharomyces cerevisiae (strain ATCC 204508 / S288c) (Baker's yeast)).